A 948-amino-acid polypeptide reads, in one-letter code: Protein translocase subunit SecA (948 aa).

ATP-binding positions include Gln90, 108–112, and Asp509; that span reads GEGKT.

It belongs to the SecA family. As to quaternary structure, monomer and homodimer. Part of the essential Sec protein translocation apparatus which comprises SecA, SecYEG and auxiliary proteins SecDF. Other proteins may also be involved.

It is found in the cell inner membrane. It localises to the cellular thylakoid membrane. The protein resides in the cytoplasm. It catalyses the reaction ATP + H2O + cellular proteinSide 1 = ADP + phosphate + cellular proteinSide 2.. In terms of biological role, part of the Sec protein translocase complex. Interacts with the SecYEG preprotein conducting channel. Has a central role in coupling the hydrolysis of ATP to the transfer of proteins into and across the cell membrane, serving as an ATP-driven molecular motor driving the stepwise translocation of polypeptide chains across the membrane. Its function is as follows. Probably participates in protein translocation into and across both the cytoplasmic and thylakoid membranes in cyanobacterial cells. The polypeptide is Protein translocase subunit SecA (Prochlorococcus marinus (strain MIT 9313)).